The sequence spans 1013 residues: NHS-like protein 3 (1013 aa).

Residue K17 is modified to Phosphoserine. The segment at 20–195 (SAKAESDNRQ…PPGSRDAVRI (176 aa)) is disordered. Residues 73–89 (QHQERQKLSKGGWDHGD) show a composition bias toward basic and acidic residues. Polar residues-rich tracts occupy residues 90–99 (TQSIQSSQTG) and 106–120 (SIYS…SSTA). S92 carries the post-translational modification Phosphoserine. Y108 is modified (phosphotyrosine). S136, S143, and S159 each carry phosphoserine. Phosphothreonine is present on T160. Basic and acidic residues predominate over residues 168 to 178 (VQKELGLRNNR). Phosphoserine is present on S213. Residue R318 is modified to Asymmetric dimethylarginine. Residues S320, S325, S328, S336, S337, S339, and S340 each carry the phosphoserine modification. The segment at 330 to 1013 (RSLGRFSSAS…PGSDPQKKLV (684 aa)) is disordered. A compositionally biased stretch (low complexity) spans 336–361 (SSASSPRPRSRNASSSSDNWSHSQSS). The span at 362–375 (ETIVSDGSTLSSKG) shows a compositional bias: polar residues. Phosphoserine is present on residues S398, S402, and S407. The span at 408-427 (TAETSDTASIRSSGQLSGRS) shows a compositional bias: polar residues. 2 stretches are compositionally biased toward low complexity: residues 484-493 (VGAVSCPPSS) and 515-530 (RTLS…SGTP). Position 529 is a phosphothreonine (T529). Phosphoserine is present on S543. The segment covering 564–577 (SVSSSLTSLCSSSS) has biased composition (low complexity). T591 is subject to Phosphothreonine. Residues 600–614 (PPHPKVPAPFSPPPS) are compositionally biased toward pro residues. At S610 the chain carries Phosphoserine. A compositionally biased stretch (low complexity) spans 615-633 (KSKSSNQAAPVLAAPAVAP). Positions 635-657 (QVSTIDTSPASPSMPQTTLTPAQ) are enriched in polar residues. Phosphoserine occurs at positions 667 and 671. Pro residues-rich tracts occupy residues 668 to 683 (PPPS…PPPT) and 706 to 716 (PSWPPPPPPAP). Residues 779 to 795 (PQKDSVGKHSGAPREDS) show a composition bias toward basic and acidic residues. Residues 814-829 (GASTGIPNPSPGSSAP) show a composition bias toward polar residues. 3 positions are modified to phosphoserine: S838, S842, and S848. Positions 859 to 873 (ASSLAASESPASALP) are enriched in low complexity. Phosphoserine occurs at positions 909, 952, and 959. The segment covering 942–961 (KAPPPVARKPSVGVPPPSPS) has biased composition (pro residues). Polar residues predominate over residues 964–975 (RTESLTAPSTNG).

Able to directly activate the TNF-NFkappaB signaling pathway. The chain is NHS-like protein 3 (Nhsl3) from Mus musculus (Mouse).